Here is a 140-residue protein sequence, read N- to C-terminus: Acyl carrier protein 1, chloroplastic (140 aa).

The transit peptide at 1–56 (MASAAAGASICIKSASFSPLAPGRISSLRSVSLPVSRKSFPSLKSSKSSFALRVSC) directs the protein to the chloroplast. Residues 60 to 135 (PETVAKVCGI…DAADLIEKLM (76 aa)) form the Carrier domain. O-(pantetheine 4'-phosphoryl)serine is present on Ser95.

This sequence belongs to the acyl carrier protein (ACP) family. 4'-phosphopantetheine is transferred from CoA to a specific serine of apo-ACP by acpS. This modification is essential for activity because fatty acids are bound in thioester linkage to the sulfhydryl of the prosthetic group.

It localises to the plastid. The protein resides in the chloroplast. The protein operates within lipid metabolism; fatty acid biosynthesis. In terms of biological role, carrier of the growing fatty acid chain in fatty acid biosynthesis. In Cuphea lanceolata (Cigar flower), this protein is Acyl carrier protein 1, chloroplastic (ACL1.1).